A 342-amino-acid polypeptide reads, in one-letter code: Signal-regulatory protein beta-2 (342 aa).

An N-terminal signal peptide occupies residues M1–G32. 2 consecutive Ig-like V-type domains span residues Q33–E143 and P157–G258. Residues Q33–G287 are Extracellular-facing. C60 and C127 are disulfide-bonded. 3 N-linked (GlcNAc...) asparagine glycosylation sites follow: N116, N179, and N231. C180 and C242 are joined by a disulfide. A helical membrane pass occupies residues L288 to L308. At L309–E342 the chain is on the cytoplasmic side. The disordered stretch occupies residues S317–E342.

It is found in the membrane. The protein is Signal-regulatory protein beta-2 (SIRPB2) of Homo sapiens (Human).